The following is a 3564-amino-acid chain: Sushi, von Willebrand factor type A, EGF and pentraxin domain-containing protein 1 (3564 aa).

The first 17 residues, methionine 1–glycine 17, serve as a signal peptide directing secretion. The VWFA domain maps to glutamate 84 to leucine 265. N-linked (GlcNAc...) asparagine glycosylation occurs at asparagine 187. 3 Sushi domains span residues valine 377–valine 436, arginine 437–glutamate 496, and arginine 497–aspartate 561. Disulfide bonds link cysteine 379–cysteine 421, cysteine 407–cysteine 434, cysteine 439–cysteine 481, cysteine 467–cysteine 494, cysteine 499–cysteine 544, and cysteine 530–cysteine 559. HYR domains lie at lysine 560–aspartate 644 and valine 645–glycine 724. A Sushi 4 domain is found at serine 725–isoleucine 789. Cystine bridges form between cysteine 727/cysteine 769, cysteine 753/cysteine 787, cysteine 1192/cysteine 1203, cysteine 1197/cysteine 1212, cysteine 1214/cysteine 1223, cysteine 1230/cysteine 1241, cysteine 1235/cysteine 1250, cysteine 1252/cysteine 1261, cysteine 1268/cysteine 1279, cysteine 1273/cysteine 1288, cysteine 1290/cysteine 1299, cysteine 1306/cysteine 1317, cysteine 1311/cysteine 1326, cysteine 1328/cysteine 1337, cysteine 1344/cysteine 1355, cysteine 1349/cysteine 1364, cysteine 1366/cysteine 1375, cysteine 1382/cysteine 1393, cysteine 1387/cysteine 1402, and cysteine 1404/cysteine 1413. Residues valine 1188–glutamate 1224 enclose the EGF-like 1 domain. One can recognise an EGF-like 2; calcium-binding domain in the interval aspartate 1226–glutamate 1262. In terms of domain architecture, EGF-like 3; calcium-binding spans asparagine 1264–glutamate 1300. The EGF-like 4; calcium-binding domain occupies aspartate 1302–glutamate 1338. One can recognise an EGF-like 5; calcium-binding domain in the interval asparagine 1340 to glutamate 1376. In terms of domain architecture, EGF-like 6; calcium-binding spans asparagine 1378 to glutamate 1414. One can recognise a Pentraxin (PTX) domain in the interval serine 1419–cysteine 1623. Sushi domains are found at residues serine 1624–arginine 1682 and isoleucine 1683–aspartate 1740. Cystine bridges form between cysteine 1626–cysteine 1667, cysteine 1653–cysteine 1680, cysteine 1685–cysteine 1725, cysteine 1711–cysteine 1738, cysteine 1744–cysteine 1756, cysteine 1750–cysteine 1765, cysteine 1767–cysteine 1778, cysteine 1784–cysteine 1824, cysteine 1810–cysteine 1837, cysteine 1842–cysteine 1882, cysteine 1868–cysteine 1895, cysteine 1900–cysteine 1940, cysteine 1926–cysteine 1953, cysteine 1958–cysteine 1998, cysteine 1984–cysteine 2011, cysteine 2016–cysteine 2056, cysteine 2042–cysteine 2073, cysteine 2078–cysteine 2121, cysteine 2107–cysteine 2136, cysteine 2141–cysteine 2181, cysteine 2167–cysteine 2194, cysteine 2199–cysteine 2240, cysteine 2226–cysteine 2254, cysteine 2259–cysteine 2299, cysteine 2285–cysteine 2313, cysteine 2318–cysteine 2358, cysteine 2344–cysteine 2371, cysteine 2376–cysteine 2417, cysteine 2403–cysteine 2430, cysteine 2435–cysteine 2475, cysteine 2461–cysteine 2488, cysteine 2493–cysteine 2533, cysteine 2519–cysteine 2546, cysteine 2551–cysteine 2591, and cysteine 2577–cysteine 2603. One can recognise an EGF-like 7; calcium-binding domain in the interval aspartate 1740 to alanine 1779. An N-linked (GlcNAc...) asparagine glycan is attached at asparagine 1760. Sushi domains are found at residues lysine 1776–alanine 1839, isoleucine 1840–leucine 1897, valine 1898–leucine 1955, valine 1956–alanine 2013, valine 2014–alanine 2075, histidine 2076–proline 2138, valine 2139–proline 2196, valine 2197–proline 2256, leucine 2257–proline 2315, threonine 2316–leucine 2373, valine 2374–proline 2432, valine 2433–proline 2490, isoleucine 2491–alanine 2548, and isoleucine 2549–proline 2605. An important for the interaction with integrin ITGA9:ITGB1 region spans residues aspartate 2634–leucine 2641. Sushi domains follow at residues glutamate 2659–serine 2708, isoleucine 2709–valine 2766, isoleucine 2767–proline 2824, valine 2825–proline 2882, valine 2883–proline 2940, alanine 2941–proline 2998, cysteine 2999–histidine 3054, alanine 3055–proline 3112, valine 3113–proline 3171, lysine 3172–proline 3231, valine 3232–glutamate 3289, serine 3290–proline 3347, asparagine 3348–lysine 3406, and isoleucine 3407–alanine 3463. 33 disulfide bridges follow: cysteine 2679–cysteine 2706, cysteine 2711–cysteine 2751, cysteine 2737–cysteine 2764, cysteine 2769–cysteine 2809, cysteine 2795–cysteine 2822, cysteine 2827–cysteine 2867, cysteine 2853–cysteine 2880, cysteine 2885–cysteine 2925, cysteine 2911–cysteine 2938, cysteine 2943–cysteine 2983, cysteine 2969–cysteine 2996, cysteine 3001–cysteine 3040, cysteine 3026–cysteine 3052, cysteine 3057–cysteine 3097, cysteine 3083–cysteine 3110, cysteine 3115–cysteine 3156, cysteine 3141–cysteine 3169, cysteine 3174–cysteine 3214, cysteine 3200–cysteine 3229, cysteine 3234–cysteine 3274, cysteine 3260–cysteine 3287, cysteine 3292–cysteine 3332, cysteine 3318–cysteine 3345, cysteine 3350–cysteine 3391, cysteine 3377–cysteine 3404, cysteine 3409–cysteine 3449, cysteine 3435–cysteine 3461, cysteine 3497–cysteine 3507, cysteine 3501–cysteine 3513, cysteine 3515–cysteine 3524, cysteine 3529–cysteine 3539, cysteine 3533–cysteine 3545, and cysteine 3547–cysteine 3556. EGF-like domains are found at residues glutamate 3493–histidine 3525 and threonine 3526–serine 3557.

In terms of assembly, interacts (via Sushi domain 21) with ITGA9:ITGB1; thereby inhibits Ca(2+) intracellular signaling and as a result represses vasocontraction. Interacts (via Sushi domain 21) with ITGA4:ITGB1; thereby inhibits Ca(2+) intracellular signaling and as a result represses vasocontraction. Interacts with ANGPT1 and ANGPT2. Interacts with PEAR1 (via extracellular domain). Interacts with HSPG2, TLN1, FN1, COPA, CCT2, IQGAP1, LAMC1 and NID1. Interacts (via C-terminus) with TIE1.

The protein resides in the secreted. It is found in the nucleus. The protein localises to the cytoplasm. It localises to the membrane. Required for morphological development, cell alignment and migration of lymphatic endothelial cells during embryonic development, potentially via modulation of ANGPT2-TIE1 signaling and subsequent activation of FOXC2 transcription. Required for embryonic lymphatic vascular development, via mediating the correct formation of the first lymphovenous contact site and tight association of the lymphatic endothelium with the venous endothelium. Represses PRKCA-mediated L-type voltage-gated channel Ca(2+) influx and ROCK-mediated calcium sensitivity in vascular smooth muscle cells, via its interaction with integrins, thereby inhibiting vasocontraction. Promotes platelet activation, via its interaction with PEAR1 and subsequent activation of AKT/mTOR signaling. Plays a role in epidermal development and keratinocyte differentiation, independent of cell-cell adhesion. May play a role in initial cell attachment of stromal osteogenic cells. May promote myoblast cell adhesion when in the presence of integrin ITGA9:ITGB1. This Rattus norvegicus (Rat) protein is Sushi, von Willebrand factor type A, EGF and pentraxin domain-containing protein 1 (Svep1).